We begin with the raw amino-acid sequence, 605 residues long: Probable Xaa-Pro aminopeptidase P (605 aa).

The Mn(2+) site is built by Asp402, Asp413, Glu511, and Glu525.

This sequence belongs to the peptidase M24B family. Mn(2+) serves as cofactor.

The catalysed reaction is Release of any N-terminal amino acid, including proline, that is linked to proline, even from a dipeptide or tripeptide.. In terms of biological role, catalyzes the removal of a penultimate prolyl residue from the N-termini of peptides. The sequence is that of Probable Xaa-Pro aminopeptidase P (AMPP) from Leptosphaeria maculans (strain JN3 / isolate v23.1.3 / race Av1-4-5-6-7-8) (Blackleg fungus).